A 544-amino-acid chain; its full sequence is Probable acyl-activating enzyme 8 (544 aa).

The protein belongs to the ATP-dependent AMP-binding enzyme family. As to expression, expressed at low levels in roots, leaves, stems, flowers and developing seeds.

Its function is as follows. May act as an acid--thiol ligase that activates carboxylic acids by forming acyl-CoAs. This is Probable acyl-activating enzyme 8 (AAE8) from Arabidopsis thaliana (Mouse-ear cress).